The sequence spans 540 residues: Probable pectinesterase/pectinesterase inhibitor 60 (540 aa).

An N-terminal signal peptide occupies residues 1-31; sequence MNIMMVQNISFLSLHLLLILLLCLRPLTTVA. A pectinesterase inhibitor 60 region spans residues 32–185; the sequence is DGNSTNIDGW…SHLISNCLAV (154 aa). N-linked (GlcNAc...) asparagine glycosylation is found at Asn34, Asn91, Asn95, Asn120, Asn161, and Asn195. The interval 225–526 is pectinesterase 60; the sequence is NLVVAKDGSG…FSVGKFIAGT (302 aa). Thr302 and Gln332 together coordinate substrate. Asp355 functions as the Proton donor; for pectinesterase activity in the catalytic mechanism. A disulfide bridge connects residues Cys369 and Cys389. Catalysis depends on Asp376, which acts as the Nucleophile; for pectinesterase activity. Substrate contacts are provided by Arg444 and Trp446.

It in the N-terminal section; belongs to the PMEI family. The protein in the C-terminal section; belongs to the pectinesterase family. In terms of tissue distribution, expressed in siliques.

It localises to the secreted. It is found in the cell wall. The catalysed reaction is [(1-&gt;4)-alpha-D-galacturonosyl methyl ester](n) + n H2O = [(1-&gt;4)-alpha-D-galacturonosyl](n) + n methanol + n H(+). It participates in glycan metabolism; pectin degradation; 2-dehydro-3-deoxy-D-gluconate from pectin: step 1/5. Functionally, acts in the modification of cell walls via demethylesterification of cell wall pectin. The chain is Probable pectinesterase/pectinesterase inhibitor 60 (PME60) from Arabidopsis thaliana (Mouse-ear cress).